Here is a 338-residue protein sequence, read N- to C-terminus: Ketol-acid reductoisomerase (NADP(+)) (338 aa).

In terms of domain architecture, KARI N-terminal Rossmann spans methionine 1–threonine 181. NADP(+) is bound by residues tyrosine 24–glutamine 27, arginine 47, serine 50, threonine 52, and aspartate 82–glutamine 85. Residue histidine 107 is part of the active site. Residue glycine 133 participates in NADP(+) binding. Positions threonine 182 to isoleucine 327 constitute a KARI C-terminal knotted domain. 4 residues coordinate Mg(2+): aspartate 190, glutamate 194, glutamate 226, and glutamate 230. Substrate is bound at residue serine 251.

The protein belongs to the ketol-acid reductoisomerase family. Mg(2+) is required as a cofactor.

It carries out the reaction (2R)-2,3-dihydroxy-3-methylbutanoate + NADP(+) = (2S)-2-acetolactate + NADPH + H(+). The enzyme catalyses (2R,3R)-2,3-dihydroxy-3-methylpentanoate + NADP(+) = (S)-2-ethyl-2-hydroxy-3-oxobutanoate + NADPH + H(+). It functions in the pathway amino-acid biosynthesis; L-isoleucine biosynthesis; L-isoleucine from 2-oxobutanoate: step 2/4. Its pathway is amino-acid biosynthesis; L-valine biosynthesis; L-valine from pyruvate: step 2/4. Functionally, involved in the biosynthesis of branched-chain amino acids (BCAA). Catalyzes an alkyl-migration followed by a ketol-acid reduction of (S)-2-acetolactate (S2AL) to yield (R)-2,3-dihydroxy-isovalerate. In the isomerase reaction, S2AL is rearranged via a Mg-dependent methyl migration to produce 3-hydroxy-3-methyl-2-ketobutyrate (HMKB). In the reductase reaction, this 2-ketoacid undergoes a metal-dependent reduction by NADPH to yield (R)-2,3-dihydroxy-isovalerate. The chain is Ketol-acid reductoisomerase (NADP(+)) from Pseudomonas fluorescens (strain ATCC BAA-477 / NRRL B-23932 / Pf-5).